Here is a 458-residue protein sequence, read N- to C-terminus: Probable ECA polymerase (458 aa).

The next 11 helical transmembrane spans lie at 3-23, 37-57, 65-85, 112-132, 154-174, 180-200, 201-221, 222-242, 340-360, 377-397, and 409-429; these read LAQFGGLFVVYLIGTLFVLTL, VFFSLLYLLTFYFGFPLTCLL, VVPVEFLLYAILSATAFYAIY, THLTWILLALVAIVTVGIFFL, GVALKRFFYFFIPAMLVVYFL, AWFFFLAATVAFGILTYVIVG, GTRANIIIAFSLFLFIGIVRG, WISLWMLVAAGVFGIVGMFWL, LVVMGGALFIPVGAVLVGMII, YKAAILQGFCFGAVFNIIVLA, and VFFCLIFGVCLLMAKLLYWLF.

The protein belongs to the WzyE family. Probably part of a complex composed of WzxE, WzyE and WzzE.

It localises to the cell inner membrane. It participates in bacterial outer membrane biogenesis; enterobacterial common antigen biosynthesis. In terms of biological role, probably involved in the polymerization of enterobacterial common antigen (ECA) trisaccharide repeat units. In Serratia proteamaculans (strain 568), this protein is Probable ECA polymerase.